The following is a 233-amino-acid chain: Uracil-DNA glycosylase (233 aa).

The active-site Proton acceptor is Asp-70.

This sequence belongs to the uracil-DNA glycosylase (UDG) superfamily. UNG family.

The protein localises to the cytoplasm. The enzyme catalyses Hydrolyzes single-stranded DNA or mismatched double-stranded DNA and polynucleotides, releasing free uracil.. In terms of biological role, excises uracil residues from the DNA which can arise as a result of misincorporation of dUMP residues by DNA polymerase or due to deamination of cytosine. The protein is Uracil-DNA glycosylase of Helicobacter pylori (strain Shi470).